Reading from the N-terminus, the 278-residue chain is Undecaprenyl-diphosphatase (278 aa).

8 consecutive transmembrane segments (helical) span residues 14 to 34 (GTTE…PWLF), 40 to 60 (GLAF…AYFW), 89 to 109 (WAVI…NDVI), 121 to 141 (TAIV…WLAE), 153 to 173 (LGLR…LPGV), 196 to 216 (FSFI…TLKL), 227 to 247 (VLFV…IAFL), and 257 to 277 (SIFI…VSFA).

This sequence belongs to the UppP family.

The protein resides in the cell membrane. The enzyme catalyses di-trans,octa-cis-undecaprenyl diphosphate + H2O = di-trans,octa-cis-undecaprenyl phosphate + phosphate + H(+). Its function is as follows. Catalyzes the dephosphorylation of undecaprenyl diphosphate (UPP). Confers resistance to bacitracin. In Thermomicrobium roseum (strain ATCC 27502 / DSM 5159 / P-2), this protein is Undecaprenyl-diphosphatase.